The following is a 138-amino-acid chain: Putative nickel-responsive regulator (138 aa).

Residues His78, His89, His91, and Cys97 each contribute to the Ni(2+) site.

It belongs to the transcriptional regulatory CopG/NikR family. The cofactor is Ni(2+).

In terms of biological role, transcriptional regulator. This chain is Putative nickel-responsive regulator, found in Thermococcus onnurineus (strain NA1).